A 358-amino-acid polypeptide reads, in one-letter code: WD repeat domain phosphoinositide-interacting protein 4 (358 aa).

2 WD repeats span residues 2-40 (AQQR…EKGH) and 188-228 (AHQS…KLVE). Positions 229-232 (LRRG) match the L/FRRG motif motif. Residues 233-272 (TDPATLYCINFSHDSSFLCASSDKGTVHIFALKDTKLNRR) form a WD 3 repeat.

The protein belongs to the WD repeat PROPPIN family.

It is found in the preautophagosomal structure. Functionally, component of the autophagy machinery that controls the major intracellular degradation process by which cytoplasmic materials are packaged into autophagosomes and delivered to lysosomes for degradation. Binds phosphatidylinositol 3-phosphate (PtdIns3P). The polypeptide is WD repeat domain phosphoinositide-interacting protein 4 (wdr45) (Danio rerio (Zebrafish)).